A 325-amino-acid polypeptide reads, in one-letter code: Homoserine O-succinyltransferase (325 aa).

Cysteine 142 functions as the Acyl-thioester intermediate in the catalytic mechanism. Residues lysine 163 and serine 191 each contribute to the substrate site. Histidine 234 serves as the catalytic Proton acceptor. Glutamate 236 is a catalytic residue. Position 248 (arginine 248) interacts with substrate.

The protein belongs to the MetA family.

It localises to the cytoplasm. The enzyme catalyses L-homoserine + succinyl-CoA = O-succinyl-L-homoserine + CoA. It functions in the pathway amino-acid biosynthesis; L-methionine biosynthesis via de novo pathway; O-succinyl-L-homoserine from L-homoserine: step 1/1. Its function is as follows. Transfers a succinyl group from succinyl-CoA to L-homoserine, forming succinyl-L-homoserine. This chain is Homoserine O-succinyltransferase, found in Bradyrhizobium japonicum.